The following is a 209-amino-acid chain: T-cell surface glycoprotein CD8 beta chain (209 aa).

Positions Met-1 to Val-21 are cleaved as a signal peptide. Positions Leu-22–Leu-131 constitute an Ig-like V-type domain. The Extracellular segment spans residues Leu-22–Pro-169. Cys-41 and Cys-115 are disulfide-bonded. Asn-101 carries an N-linked (GlcNAc...) asparagine glycan. The chain crosses the membrane as a helical span at residues Ile-170–Ile-190. Over His-191–Lys-209 the chain is Cytoplasmic.

Forms disulfide-linked heterodimers with CD8A at the cell surface. Interacts with CD3D; this interaction couples TCR-CD3 with CD8. Interacts with LCK. Post-translationally, phosphorylated as a consequence of T-cell activation. Palmitoylated at the cytoplasmic tail and thereby targets the heterodimer CD8A/CD8B to lipid rafts unlike CD8A homodimers.

It is found in the cell membrane. In terms of biological role, integral membrane glycoprotein that plays an essential role in the immune response and serves multiple functions in responses against both external and internal offenses. In T-cells, functions primarily as a coreceptor for MHC class I molecule:peptide complex. The antigens presented by class I peptides are derived from cytosolic proteins while class II derived from extracellular proteins. Interacts simultaneously with the T-cell receptor (TCR) and the MHC class I proteins presented by antigen presenting cells (APCs). In turn, recruits the Src kinase LCK to the vicinity of the TCR-CD3 complex. A palmitoylation site in the cytoplasmic tail of CD8B chain contributes to partitioning of CD8 into the plasma membrane lipid rafts where signaling proteins are enriched. Once LCK recruited, it initiates different intracellular signaling pathways by phosphorylating various substrates ultimately leading to lymphokine production, motility, adhesion and activation of cytotoxic T-lymphocytes (CTLs). Additionally, plays a critical role in thymic selection of CD8+ T-cells. This chain is T-cell surface glycoprotein CD8 beta chain (CD8B), found in Saimiri sciureus (Common squirrel monkey).